The following is a 685-amino-acid chain: Transmembrane protein 214 (685 aa).

2 disordered regions span residues M1 to L36 and M66 to G104. Position 2 is an N-acetylalanine (A2). N267 and N305 each carry an N-linked (GlcNAc...) asparagine glycan. 2 helical membrane passes run P479–L499 and L612–L632.

This sequence belongs to the TMEM214 family. Constitutively interacts with CASP4; required for the localization of procaspase 4 to the ER.

It is found in the endoplasmic reticulum membrane. In terms of biological role, critical mediator, in cooperation with CASP4, of endoplasmic reticulum-stress induced apoptosis. Required or the activation of CASP4 following endoplasmic reticulum stress. The protein is Transmembrane protein 214 (Tmem214) of Rattus norvegicus (Rat).